A 365-amino-acid polypeptide reads, in one-letter code: Coxsackievirus and adenovirus receptor homolog (365 aa).

The N-terminal stretch at methionine 1–glycine 19 is a signal peptide. Ig-like C2-type domains follow at residues leucine 20–threonine 136 and proline 141–aspartate 228. Residues leucine 20–threonine 238 are Extracellular-facing. 3 cysteine pairs are disulfide-bonded: cysteine 41-cysteine 120, cysteine 146-cysteine 223, and cysteine 162-cysteine 212. Asparagine 106 is a glycosylation site (N-linked (GlcNAc...) asparagine). A helical transmembrane segment spans residues isoleucine 239–cysteine 259. S-palmitoyl cysteine attachment occurs at residues cysteine 259 and cysteine 260. Topologically, residues cysteine 260 to valine 365 are cytoplasmic. Residues tyrosine 269–proline 282 are compositionally biased toward basic and acidic residues. A disordered region spans residues tyrosine 269–proline 343. Positions serine 286–proline 322 are enriched in polar residues. Phosphoserine is present on residues serine 297, serine 304, serine 306, serine 323, serine 332, and serine 363. The PDZ-binding motif lies at lysine 360–valine 365.

Monomer. May form homodimers. Interacts with LNX, MAGI1, DLG4, PRKCABP, TJP1 and CTNNB1. Interacts with MPDZ; recruits MPDZ to intercellular contact sites. Interacts with JAML (homodimeric form). In terms of processing, N-glycosylated. Post-translationally, palmitoylated on Cys-259 and/or Cys-260; required for proper localization to the plasma membrane.

Its subcellular location is the cell membrane. The protein localises to the basolateral cell membrane. It is found in the cell junction. The protein resides in the tight junction. It localises to the adherens junction. In terms of biological role, component of the epithelial apical junction complex that may function as a homophilic cell adhesion molecule and is essential for tight junction integrity. Also involved in transepithelial migration of leukocytes through adhesive interactions with JAML a transmembrane protein of the plasma membrane of leukocytes. The interaction between both receptors also mediates the activation of gamma-delta T-cells, a subpopulation of T-cells residing in epithelia and involved in tissue homeostasis and repair. Upon epithelial CXADR-binding, JAML induces downstream cell signaling events in gamma-delta T-cells through PI3-kinase and MAP kinases. It results in proliferation and production of cytokines and growth factors by T-cells that in turn stimulate epithelial tissues repair. This Bos taurus (Bovine) protein is Coxsackievirus and adenovirus receptor homolog (CXADR).